The chain runs to 142 residues: Holo-[acyl-carrier-protein] synthase (142 aa).

Mg(2+) contacts are provided by aspartate 8 and glutamate 57.

It belongs to the P-Pant transferase superfamily. AcpS family. It depends on Mg(2+) as a cofactor.

Its subcellular location is the cytoplasm. The enzyme catalyses apo-[ACP] + CoA = holo-[ACP] + adenosine 3',5'-bisphosphate + H(+). Transfers the 4'-phosphopantetheine moiety from coenzyme A to a Ser of acyl-carrier-protein. This is Holo-[acyl-carrier-protein] synthase from Ruegeria sp. (strain TM1040) (Silicibacter sp.).